A 76-amino-acid chain; its full sequence is Large ribosomal subunit protein bL31 (76 aa).

The Zn(2+) site is built by Cys-16, Cys-18, Cys-37, and Cys-40.

Belongs to the bacterial ribosomal protein bL31 family. Type A subfamily. As to quaternary structure, part of the 50S ribosomal subunit. Zn(2+) is required as a cofactor.

Its function is as follows. Binds the 23S rRNA. The polypeptide is Large ribosomal subunit protein bL31 (Maridesulfovibrio salexigens (strain ATCC 14822 / DSM 2638 / NCIMB 8403 / VKM B-1763) (Desulfovibrio salexigens)).